The following is a 68-amino-acid chain: MITYKKLLDELKKEIGPIAKIFLNKAMESLGYDDVDDSNYKEILSVLKMNKELREYVEIVEERLEKEG.

This is an uncharacterized protein from Archaeoglobus fulgidus (strain ATCC 49558 / DSM 4304 / JCM 9628 / NBRC 100126 / VC-16).